A 600-amino-acid chain; its full sequence is Sodium- and chloride-dependent betaine transporter (600 aa).

The disordered stretch occupies residues 1 to 31; it reads MGTSEHVPLPTDEAKAKELEQSQHSEEPDRG. At 1–38 the chain is on the cytoplasmic side; sequence MGTSEHVPLPTDEAKAKELEQSQHSEEPDRGQWTGKFD. Basic and acidic residues predominate over residues 12-30; the sequence is DEAKAKELEQSQHSEEPDR. 3 helical membrane passes run 39 to 59, 68 to 88, and 116 to 136; these read FLMS…FPYL, FLVV…LMEV, and VVIA…AMFY. Topologically, residues 137–207 are extracellular; that stretch reads MISSIAWVFP…DTGDISEFGG (71 aa). Residue Asn-165 is glycosylated (N-linked (GlcNAc...) asparagine). A run of 2 helical transmembrane segments spans residues 208-228 and 237-257; these read IQWE…FALW and FVYF…IRGL. Residue Asn-273 is glycosylated (N-linked (GlcNAc...) asparagine). The next 7 membrane-spanning stretches (helical) occupy residues 286 to 306, 321 to 341, 378 to 398, 420 to 440, 454 to 474, 499 to 519, and 536 to 556; these read AGTQ…ALGS, MCFI…SILG, VFAV…QVCM, SLGI…THSG, GYAL…GFGA, FCAP…YHPV, and WFLS…YLFF. Topologically, residues 557–600 are cytoplasmic; the sequence is TNKHLTLKERVRKGLNLDGSFESPAKKNLVNNAEELKFIESSSQ.

The protein belongs to the sodium:neurotransmitter symporter (SNF) family. As to expression, highly expressed in the head, the excretory canal, tail hypodermal cells, epidermis and vulval epithelial cells. Expressed in the excretory canal-associated neuron and in some non-amphidial sensory neurons in the head (at protein level).

The protein resides in the cell membrane. Betaine transporter dependent on Na(+) and Cl(-) ions that functions primarily in the epidermis to clear betaine from the extracellular space. Elicits current in response to betaine but not in response to GABA, L-carnitine, sarcosine, glycine or dimethylglycine. The protein is Sodium- and chloride-dependent betaine transporter of Caenorhabditis elegans.